The following is a 488-amino-acid chain: Protein nucleotidyltransferase YdiU (488 aa).

Residues glycine 91, glycine 93, arginine 94, lysine 114, aspartate 126, glycine 127, arginine 177, and arginine 184 each coordinate ATP. The active-site Proton acceptor is aspartate 253. Asparagine 254 and aspartate 263 together coordinate Mg(2+). Residue aspartate 263 participates in ATP binding.

It belongs to the SELO family. It depends on Mg(2+) as a cofactor. Mn(2+) is required as a cofactor.

The catalysed reaction is L-seryl-[protein] + ATP = 3-O-(5'-adenylyl)-L-seryl-[protein] + diphosphate. The enzyme catalyses L-threonyl-[protein] + ATP = 3-O-(5'-adenylyl)-L-threonyl-[protein] + diphosphate. It carries out the reaction L-tyrosyl-[protein] + ATP = O-(5'-adenylyl)-L-tyrosyl-[protein] + diphosphate. It catalyses the reaction L-histidyl-[protein] + UTP = N(tele)-(5'-uridylyl)-L-histidyl-[protein] + diphosphate. The catalysed reaction is L-seryl-[protein] + UTP = O-(5'-uridylyl)-L-seryl-[protein] + diphosphate. The enzyme catalyses L-tyrosyl-[protein] + UTP = O-(5'-uridylyl)-L-tyrosyl-[protein] + diphosphate. Its function is as follows. Nucleotidyltransferase involved in the post-translational modification of proteins. It can catalyze the addition of adenosine monophosphate (AMP) or uridine monophosphate (UMP) to a protein, resulting in modifications known as AMPylation and UMPylation. The polypeptide is Protein nucleotidyltransferase YdiU (Bacillus mycoides (strain KBAB4) (Bacillus weihenstephanensis)).